We begin with the raw amino-acid sequence, 313 residues long: Homoserine O-succinyltransferase (313 aa).

C142 functions as the Acyl-thioester intermediate in the catalytic mechanism. The substrate site is built by K163 and S192. H235 acts as the Proton acceptor in catalysis. The active site involves E237. R249 serves as a coordination point for substrate.

It belongs to the MetA family.

The protein resides in the cytoplasm. The enzyme catalyses L-homoserine + succinyl-CoA = O-succinyl-L-homoserine + CoA. It participates in amino-acid biosynthesis; L-methionine biosynthesis via de novo pathway; O-succinyl-L-homoserine from L-homoserine: step 1/1. Functionally, transfers a succinyl group from succinyl-CoA to L-homoserine, forming succinyl-L-homoserine. In Shewanella sp. (strain MR-4), this protein is Homoserine O-succinyltransferase.